The sequence spans 273 residues: Zinc finger protein 80 (273 aa).

C2H2-type zinc fingers lie at residues 49–71, 77–99, 103–127, 133–155, 161–183, 189–211, and 217–239; these read YKCK…QQIH, YECQ…VRIH, KPCK…HQIH, YECS…RMTH, FGCK…MKIH, YKCS…SMTH, and YECK…TRSH.

This sequence belongs to the krueppel C2H2-type zinc-finger protein family.

It is found in the nucleus. May be involved in transcriptional regulation. The sequence is that of Zinc finger protein 80 (ZNF80) from Pongo pygmaeus (Bornean orangutan).